Here is a 298-residue protein sequence, read N- to C-terminus: Bifunctional protein FolD (298 aa).

NADP(+) is bound by residues 166–168 (GRS), Ser-191, and Ile-232.

Belongs to the tetrahydrofolate dehydrogenase/cyclohydrolase family. As to quaternary structure, homodimer.

It carries out the reaction (6R)-5,10-methylene-5,6,7,8-tetrahydrofolate + NADP(+) = (6R)-5,10-methenyltetrahydrofolate + NADPH. It catalyses the reaction (6R)-5,10-methenyltetrahydrofolate + H2O = (6R)-10-formyltetrahydrofolate + H(+). It participates in one-carbon metabolism; tetrahydrofolate interconversion. Functionally, catalyzes the oxidation of 5,10-methylenetetrahydrofolate to 5,10-methenyltetrahydrofolate and then the hydrolysis of 5,10-methenyltetrahydrofolate to 10-formyltetrahydrofolate. The polypeptide is Bifunctional protein FolD (Erythrobacter litoralis (strain HTCC2594)).